A 530-amino-acid polypeptide reads, in one-letter code: Arginine--tRNA ligase (530 aa).

A 'HIGH' region motif is present at residues 113–123; the sequence is ANPTGPLHIGH.

The protein belongs to the class-I aminoacyl-tRNA synthetase family. Monomer.

It is found in the cytoplasm. It carries out the reaction tRNA(Arg) + L-arginine + ATP = L-arginyl-tRNA(Arg) + AMP + diphosphate. This chain is Arginine--tRNA ligase, found in Campylobacter jejuni subsp. jejuni serotype O:6 (strain 81116 / NCTC 11828).